Here is a 367-residue protein sequence, read N- to C-terminus: Mitogen-activated protein kinase 12 (367 aa).

In terms of domain architecture, Protein kinase spans 27–311; sequence YQDLQPVGSG…AAEALAHPYF (285 aa). ATP-binding positions include 33-41 and K56; that span reads VGSGAYGAV. Residue D153 is the Proton acceptor of the active site. A Phosphothreonine; by MAP2K3 and MAP2K6 modification is found at T183. The TXY motif lies at 183–185; sequence TGY. Y185 carries the phosphotyrosine; by MAP2K3 and MAP2K6 modification.

The protein belongs to the protein kinase superfamily. CMGC Ser/Thr protein kinase family. MAP kinase subfamily. As to quaternary structure, monomer. Interacts with the PDZ domain of the syntrophin SNTA1. Interacts with LIN7C, SCRIB, SYNJ2BP and SH3BP5. Interacts with PTPN4; this interaction induces the activation of PTPN4 phosphatase activity. It depends on Mg(2+) as a cofactor. In terms of processing, dually phosphorylated on Thr-183 and Tyr-185 by MAP2K3/MKK3 and MAP2K6/MKK6, which activates the enzyme. Post-translationally, ubiquitinated. Ubiquitination leads to degradation by the proteasome pathway. In terms of tissue distribution, highly expressed in skeletal muscle, lung and testes and also in the heart and thymus of both adult and neonatal rats.

It is found in the cytoplasm. Its subcellular location is the nucleus. The protein resides in the mitochondrion. The catalysed reaction is L-seryl-[protein] + ATP = O-phospho-L-seryl-[protein] + ADP + H(+). It carries out the reaction L-threonyl-[protein] + ATP = O-phospho-L-threonyl-[protein] + ADP + H(+). Activated by phosphorylation on threonine and tyrosine. MAP2K3/MKK3 and MAP2K6/MKK6 are both essential for the activation of MAPK12 induced by environmental stress, whereas MAP2K6/MKK6 is the major MAPK12 activator in response to TNF-alpha. Its function is as follows. Serine/threonine kinase which acts as an essential component of the MAP kinase signal transduction pathway. MAPK12 is one of the four p38 MAPKs which play an important role in the cascades of cellular responses evoked by extracellular stimuli such as pro-inflammatory cytokines or physical stress leading to direct activation of transcription factors such as ELK1 and ATF2. Accordingly, p38 MAPKs phosphorylate a broad range of proteins and it has been estimated that they may have approximately 200 to 300 substrates each. Some of the targets are downstream kinases such as MAPKAPK2, which are activated through phosphorylation and further phosphorylate additional targets. Plays a role in myoblast differentiation and also in the down-regulation of cyclin D1 in response to hypoxia in adrenal cells suggesting MAPK12 may inhibit cell proliferation while promoting differentiation. Phosphorylates DLG1. Following osmotic shock, MAPK12 in the cell nucleus increases its association with nuclear DLG1, thereby causing dissociation of DLG1-SFPQ complexes. This function is independent of its catalytic activity and could affect mRNA processing and/or gene transcription to aid cell adaptation to osmolarity changes in the environment. Regulates UV-induced checkpoint signaling and repair of UV-induced DNA damage and G2 arrest after gamma-radiation exposure. MAPK12 is involved in the regulation of SLC2A1 expression and basal glucose uptake in L6 myotubes; and negatively regulates SLC2A4 expression and contraction-mediated glucose uptake in adult skeletal muscle. C-Jun (JUN) phosphorylation is stimulated by MAPK14 and inhibited by MAPK12, leading to a distinct AP-1 regulation. MAPK12 is required for the normal kinetochore localization of PLK1, prevents chromosomal instability and supports mitotic cell viability. MAPK12-signaling is also positively regulating the expansion of transient amplifying myogenic precursor cells during muscle growth and regeneration. This chain is Mitogen-activated protein kinase 12 (Mapk12), found in Rattus norvegicus (Rat).